The chain runs to 358 residues: Forkhead box protein I1c (358 aa).

The segment covering 1 to 13 has biased composition (polar residues); that stretch reads MNSIHLPSHQRTS. Disordered regions lie at residues 1–25 and 191–255; these read MNSIHLPSHQRTSAPGLHQHRPKGA and DNGN…PSGI. The segment at residues 106-200 is a DNA-binding region (fork-head); the sequence is RPPYSYSALI…DNGNFRRKRK (95 aa).

It is found in the nucleus. Probable transcription factor. The protein is Forkhead box protein I1c of Xenopus tropicalis (Western clawed frog).